The chain runs to 210 residues: Somatotropin (210 aa).

An N-terminal signal peptide occupies residues 1 to 22; sequence MGQVFLLMPVLLVSCFLSQGAA. His-38 lines the Zn(2+) pocket. Cys-71 and Cys-183 are disulfide-bonded. Position 192 (Glu-192) interacts with Zn(2+). An intrachain disulfide couples Cys-200 to Cys-208.

It belongs to the somatotropin/prolactin family.

The protein resides in the secreted. Its function is as follows. Growth hormone plays an important role in growth control and is involved in the regulation of several anabolic processes. Implicated as an osmoregulatory substance important for seawater adaptation. The polypeptide is Somatotropin (gh) (Oncorhynchus keta (Chum salmon)).